The chain runs to 140 residues: Organic hydroperoxide resistance protein-like (140 aa).

It belongs to the OsmC/Ohr family.

This chain is Organic hydroperoxide resistance protein-like, found in Staphylococcus aureus (strain USA300).